The primary structure comprises 101 residues: MKDKGKLVIWPAYIDQTRSRSNGRIISRKNAVKEPHLNEIKDAAKNLGLNPEVEPEKAYPKSWWEVSGRVLVDDRGPKSVIAKQISLEIRKKRGKGVPAKT.

Belongs to the SRP19 family. As to quaternary structure, part of the signal recognition particle protein translocation system, which is composed of SRP and FtsY. Archaeal SRP consists of a 7S RNA molecule of 300 nucleotides and two protein subunits: SRP54 and SRP19.

The protein localises to the cytoplasm. Functionally, involved in targeting and insertion of nascent membrane proteins into the cytoplasmic membrane. Binds directly to 7S RNA and mediates binding of the 54 kDa subunit of the SRP. The sequence is that of Signal recognition particle 19 kDa protein from Methanosarcina acetivorans (strain ATCC 35395 / DSM 2834 / JCM 12185 / C2A).